The sequence spans 394 residues: uncharacterized protein (394 aa).

Phosphoserine is present on residues Ser117 and Ser121. 3 disordered regions span residues 177-295, 315-347, and 370-394; these read DSDE…PGTF, KRSIMLPQDIDPTFPDSEPEDDGHASSTVGSLS, and SSEVLRNSKSPPLDIARKAVGAHRV. Acidic residues predominate over residues 178-190; that stretch reads SDEEDEVDDEEIE. Composition is skewed to polar residues over residues 191 to 207 and 216 to 230; these read SFNSFSRKMQTISNSRY and EKQSCSSESDRVSQI. Composition is skewed to acidic residues over residues 231–263 and 284–295; these read SDDEEDEEGSADEEDEEDSDVELSESSLSDDED and IPDDTDFVPGTF. The span at 370 to 379 shows a compositional bias: polar residues; sequence SSEVLRNSKS. At Ser379 the chain carries Phosphoserine.

Its subcellular location is the nucleus. This is an uncharacterized protein from Schizosaccharomyces pombe (strain 972 / ATCC 24843) (Fission yeast).